Reading from the N-terminus, the 365-residue chain is NAD(P)H-quinone oxidoreductase subunit 1, chloroplastic (365 aa).

8 consecutive transmembrane segments (helical) span residues 27–47 (VWIFVPIFSLVLGIITGVLVI), 98–118 (FSIGPSIAVISILLSYSVIPF), 129–149 (IGIFLWIAISSIAPIGLLMSG), 165–185 (AAQSISYEIPLTLCVLSISLL), 203–223 (FWGWNLWRQPIGFIIFLISSL), 253–273 (FGLFYVASYINLLISSLFVTI), 302–322 (IFGTTIGIFITLAKTYLFLFI), and 345–365 (FLLPISLGNLLLTTSFQLFSL).

Belongs to the complex I subunit 1 family. In terms of assembly, NDH is composed of at least 16 different subunits, 5 of which are encoded in the nucleus.

Its subcellular location is the plastid. It localises to the chloroplast thylakoid membrane. The catalysed reaction is a plastoquinone + NADH + (n+1) H(+)(in) = a plastoquinol + NAD(+) + n H(+)(out). The enzyme catalyses a plastoquinone + NADPH + (n+1) H(+)(in) = a plastoquinol + NADP(+) + n H(+)(out). NDH shuttles electrons from NAD(P)H:plastoquinone, via FMN and iron-sulfur (Fe-S) centers, to quinones in the photosynthetic chain and possibly in a chloroplast respiratory chain. The immediate electron acceptor for the enzyme in this species is believed to be plastoquinone. Couples the redox reaction to proton translocation, and thus conserves the redox energy in a proton gradient. In Arabis hirsuta (Hairy rock-cress), this protein is NAD(P)H-quinone oxidoreductase subunit 1, chloroplastic.